We begin with the raw amino-acid sequence, 83 residues long: uncharacterized protein (83 aa).

The next 3 membrane-spanning stretches (helical) occupy residues 4 to 24, 32 to 52, and 54 to 74; these read AILS…GVLM, IGNI…LKAF, and YYDL…IIIG.

It localises to the cell membrane. This is an uncharacterized protein from Methanocaldococcus jannaschii (strain ATCC 43067 / DSM 2661 / JAL-1 / JCM 10045 / NBRC 100440) (Methanococcus jannaschii).